Consider the following 363-residue polypeptide: Peroxisomal (S)-2-hydroxyacid oxidase GLO4 (363 aa).

Residues 1–357 enclose the FMN hydroxy acid dehydrogenase domain; that stretch reads MDQIVNVDEF…TRNHVRTENE (357 aa). FMN contacts are provided by residues 78 to 80, Ser107, 128 to 130, and Thr156; these read PTA and QIY. A 2-oxocarboxylate is bound at residue Tyr130. Position 165 (Arg165) interacts with a 2-oxocarboxylate. Residues Lys228 and Ser250 each coordinate FMN. Catalysis depends on His252, which acts as the Proton acceptor. Arg255 provides a ligand contact to a 2-oxocarboxylate. FMN contacts are provided by residues 283-287 and 306-307; these read DGGVR and GR. Positions 361-363 match the Microbody targeting signal motif; it reads SML.

Belongs to the FMN-dependent alpha-hydroxy acid dehydrogenase family. As to quaternary structure, homotetramer. FMN is required as a cofactor.

Its subcellular location is the peroxisome. It catalyses the reaction a (2S)-2-hydroxycarboxylate + O2 = a 2-oxocarboxylate + H2O2. It carries out the reaction 2-hydroxydodecanoate + O2 = 2-oxododecanoate + H2O2. The catalysed reaction is 2-hydroxyhexanoate + O2 = 2-oxohexanoate + H2O2. The enzyme catalyses 2-hydroxyoctanoate + O2 = 2-oxooctanoate + H2O2. It catalyses the reaction (S)-lactate + O2 = pyruvate + H2O2. It functions in the pathway lipid metabolism; fatty acid metabolism. In terms of biological role, oxidase that catalyzes the oxidation of a broad range of 2-hydroxyacids to the corresponding 2-oxoacids, with a reduction of O2 to H2O2. Displays the highest activity with the long-chain fatty acid 2-hydroxydodecanoate and has intermediate activity with 2-hydroxyhexanoate, 2-hydroxyoctanote, and the short-chain hydroxyacid (S)-lactate (L-lactate). With much lower activity, it can also use glycolate, leucic acid, valic acid, and isoleucic acid as substrates in vitro. Cannot use 2-hydroxyhexadecanoate or D-lactate as substrates. May be involved in a general medium- and long-chain fatty acid catabolic pathway such as alpha-oxidation. The polypeptide is Peroxisomal (S)-2-hydroxyacid oxidase GLO4 (GLO4) (Arabidopsis thaliana (Mouse-ear cress)).